Reading from the N-terminus, the 283-residue chain is Urease accessory protein UreD (283 aa).

Belongs to the UreD family. In terms of assembly, ureD, UreF and UreG form a complex that acts as a GTP-hydrolysis-dependent molecular chaperone, activating the urease apoprotein by helping to assemble the nickel containing metallocenter of UreC. The UreE protein probably delivers the nickel.

Its subcellular location is the cytoplasm. Functionally, required for maturation of urease via the functional incorporation of the urease nickel metallocenter. The polypeptide is Urease accessory protein UreD (Acaryochloris marina (strain MBIC 11017)).